We begin with the raw amino-acid sequence, 33 residues long: Trypsin inhibitor 1 (33 aa).

3 disulfides stabilise this stretch: cysteine 1–cysteine 17, cysteine 8–cysteine 21, and cysteine 16–cysteine 32.

As to expression, expressed in leaves and fruit flesh (at protein level).

Its function is as follows. Inhibits trypsin (IC(50)=471 nM). The protein is Trypsin inhibitor 1 of Beta vulgaris subsp. vulgaris (Beet).